A 159-amino-acid polypeptide reads, in one-letter code: UPF0262 protein CCNA_02430 (159 aa).

This sequence belongs to the UPF0262 family.

This Caulobacter vibrioides (strain NA1000 / CB15N) (Caulobacter crescentus) protein is UPF0262 protein CCNA_02430.